Here is a 248-residue protein sequence, read N- to C-terminus: PF03932 family protein CutC (248 aa).

The protein belongs to the CutC family. As to quaternary structure, homodimer.

It localises to the cytoplasm. The polypeptide is PF03932 family protein CutC (Escherichia coli O7:K1 (strain IAI39 / ExPEC)).